The following is a 388-amino-acid chain: Probable acetyl-CoA acetyltransferase (388 aa).

The active-site Acyl-thioester intermediate is the C84. An Isoglutamyl lysine isopeptide (Lys-Gln) (interchain with Q-Cter in protein Pup) cross-link involves residue K187. Catalysis depends on proton acceptor residues H345 and C375.

This sequence belongs to the thiolase-like superfamily. Thiolase family.

It catalyses the reaction 2 acetyl-CoA = acetoacetyl-CoA + CoA. In Mycolicibacterium smegmatis (strain ATCC 700084 / mc(2)155) (Mycobacterium smegmatis), this protein is Probable acetyl-CoA acetyltransferase.